Consider the following 316-residue polypeptide: DMOA farnesyltransferase nvfB (316 aa).

The next 9 helical transmembrane spans lie at 47–67 (VVGV…TILL), 71–91 (LILV…NDVI), 115–135 (WNAV…LSFL), 139–159 (CAIE…GKRF), 162–182 (FPQL…HSLG), 191–211 (PTFF…VVYS), 234–254 (IELL…AAGY), 258–278 (LGIP…LYFL), and 294–314 (KLAC…EYYL).

It belongs to the UbiA prenyltransferase family.

The protein resides in the membrane. It carries out the reaction 3,5-dimethylorsellinate + (2E,6E)-farnesyl diphosphate = (3R)-3-farnesyl-6-hydroxy-2,3,5-trimethyl-4-oxocyclohexa-1,5-diene-1-carboxylate + diphosphate + H(+). Its pathway is secondary metabolite biosynthesis; terpenoid biosynthesis. In terms of biological role, DMOA farnesyltransferase; part of the gene cluster that mediates the biosynthesis of novofumigatonin, a heavily oxygenated meroterpenoid containing a unique orthoester moiety. The first step of the pathway is the synthesis of 3,5-dimethylorsellinic acid (DMOA) by the polyketide synthase nvfA via condensation of one acetyl-CoA starter unit with 3 malonyl-CoA units and 2 methylations. DMOA is then converted to farnesyl-DMOA by the farnesyltransferase nvfB. Epoxydation by FAD-dependent monooxygenase nvfK, followed by a protonation-initiated cyclization catalyzed by the terpene cyclase nvfL leads to the production of asnavolin H. The short chain dehydrogenase nvfC then as a 3-OH dehydrogenase of asnovolin H to yield chemesin D. There are two branches to synthesize asnovolin A from chemesin D. In one branch, chemesin D undergoes Baeyer-Villiger oxidation by nvfH, methylation by nvfJ, and enoyl reduction by the nvfM D enoylreductase that reduces the double bond between C-5'and C-6', to form respectively asnovolin I, asnovolin K, and asnovolin A. In the other branch, the methylation precedes the Baeyer-Villiger oxidation and the enoyl reduction to yield asnovolin A via the asnovolin J intermediate. Asnovolin A is further converted to fumigatonoid A by the Fe(II)/2-oxoglutarate-dependent dioxygenase nvfI that catalyzes an endoperoxidation reaction. The alpha/beta hydrolase nvfD then acts as an epimerase that converts fumigatonoid A to its C-5' epimer, which then undergoes spontaneous or nvfD-catalyzed lactonization. The following step utilizes the ketoreductase nvfG to produce fumigatonoid B. The dioxygenase nvfE further converts fumigatonoid B into fumigatonoid C. Finally the Fe(II)/2-oxoglutarate-dependent dioxygenase nvfF catalyzes two rounds of oxidation to transform fumigatonoid C into the end product, novofumigatonin A. This is DMOA farnesyltransferase nvfB from Aspergillus novofumigatus (strain IBT 16806).